Consider the following 373-residue polypeptide: Protein-glutamate methylesterase/protein-glutamine glutaminase 2 (373 aa).

In terms of domain architecture, Response regulatory spans 4–121; sequence KVLVVDDSGF…SRNPEKVKQL (118 aa). Asp-55 is subject to 4-aspartylphosphate. The tract at residues 136–181 is disordered; the sequence is FSSYSAPAPQPASAPAPAPSSFASSRSPAPAPAPARAAAPAASANS. Residues 143-153 show a composition bias toward pro residues; sequence APQPASAPAPA. The span at 154 to 181 shows a compositional bias: low complexity; sequence PSSFASSRSPAPAPAPARAAAPAASANS. A CheB-type methylesterase domain is found at 182–370; that stretch reads PAPKRKAYKL…LDDIGRHLVE (189 aa). Active-site residues include Ser-197, His-224, and Asp-317.

This sequence belongs to the CheB family. Phosphorylated by CheA. Phosphorylation of the N-terminal regulatory domain activates the methylesterase activity.

The protein localises to the cytoplasm. The enzyme catalyses [protein]-L-glutamate 5-O-methyl ester + H2O = L-glutamyl-[protein] + methanol + H(+). It catalyses the reaction L-glutaminyl-[protein] + H2O = L-glutamyl-[protein] + NH4(+). Its function is as follows. Involved in chemotaxis. Part of a chemotaxis signal transduction system that modulates chemotaxis in response to various stimuli. Catalyzes the demethylation of specific methylglutamate residues introduced into the chemoreceptors (methyl-accepting chemotaxis proteins or MCP) by CheR. Also mediates the irreversible deamidation of specific glutamine residues to glutamic acid. The polypeptide is Protein-glutamate methylesterase/protein-glutamine glutaminase 2 (Pseudomonas fluorescens (strain ATCC BAA-477 / NRRL B-23932 / Pf-5)).